A 1419-amino-acid polypeptide reads, in one-letter code: Multidrug resistance protein 1 (1419 aa).

The segment at Met-1–Asn-37 is r domain; regulates transporter activity. Topologically, residues Met-1–Ser-60 are cytoplasmic. One can recognise an ABC transmembrane type-1 1 domain in the interval Phe-58 to Lys-345. Residues Phe-61–Ile-81 form a helical membrane-spanning segment. Over Leu-82–Asp-90 the chain is Vacuolar. A helical transmembrane segment spans residues Ile-91–Ile-111. The Cytoplasmic segment spans residues Ser-112 to Thr-168. A helical membrane pass occupies residues Lys-169 to Ile-189. Topologically, residues Lys-190–Asn-191 are vacuolar. The chain crosses the membrane as a helical span at residues Ala-192–Cys-212. Topologically, residues Asn-213 to Glu-275 are cytoplasmic. The chain crosses the membrane as a helical span at residues Ala-276 to Tyr-296. Residues Gly-297–Gly-316 lie on the Vacuolar side of the membrane. Residues Ala-317–Leu-337 traverse the membrane as a helical segment. The Cytoplasmic segment spans residues Pro-338–Asp-788. Positions Ile-378–Lys-662 constitute an ABC transporter 1 domain. ATP is bound by residues Tyr-387, Thr-389, Arg-390, Ser-415, Cys-417, Gly-418, Lys-419, Ser-420, Thr-421, Gln-462, Lys-562, Ser-564, Gly-566, and Gln-567. A Mg(2+)-binding site is contributed by Gln-462. 2 disordered regions span residues Glu-639–Asn-665 and Ser-697–Asn-752. 2 stretches are compositionally biased toward low complexity: residues Asn-643–Asn-665 and Ser-697–Ser-715. Positions Gly-723 to Thr-749 are enriched in polar residues. The helical transmembrane segment at Val-789–Leu-809 threads the bilayer. The region spanning Ile-791–Leu-1083 is the ABC transmembrane type-1 2 domain. The Vacuolar segment spans residues Tyr-810–Lys-829. The chain crosses the membrane as a helical span at residues Tyr-830–Tyr-850. Over Tyr-851–Asn-907 the chain is Cytoplasmic. The next 2 membrane-spanning stretches (helical) occupy residues Ile-908–Phe-928 and Cys-929–Val-949. The Cytoplasmic portion of the chain corresponds to Arg-950–Gly-1032. A helical transmembrane segment spans residues Phe-1033–Ile-1053. Over Lys-1054–Thr-1057 the chain is Vacuolar. The chain crosses the membrane as a helical span at residues Ile-1058–Gly-1078. Residues Lys-1079–Lys-1419 lie on the Cytoplasmic side of the membrane. Positions Val-1126 to Lys-1416 constitute an ABC transporter 2 domain. Residues Tyr-1135, Arg-1138, Thr-1163, Gly-1164, Gly-1166, Lys-1167, Ser-1168, Thr-1169, Gln-1256, Leu-1312, Ser-1313, Gly-1315, and Gln-1316 each coordinate ATP. Ser-1168 serves as a coordination point for Mg(2+). A Mg(2+)-binding site is contributed by Gln-1256.

It belongs to the ABC transporter superfamily. ABCB family. Multidrug resistance exporter (TC 3.A.1.201) subfamily.

The protein localises to the vacuole membrane. The enzyme catalyses ATP + H2O + xenobioticSide 1 = ADP + phosphate + xenobioticSide 2.. In terms of biological role, energy-dependent efflux pump responsible for decreased drug accumulation in multidrug-resistant cells. Transports lumefantrine, mefloquine, chloroquine, quinine, quinidine, amodiaquine, piperaquine, dihydroartemisinin and quinacrine. The protein is Multidrug resistance protein 1 of Plasmodium falciparum (isolate 3D7).